Here is a 154-residue protein sequence, read N- to C-terminus: uncharacterized protein (154 aa).

Helical transmembrane passes span 39-61, 65-87, 94-113, and 128-150; these read LLIF…FFAR, LPYI…VSLL, VESL…RVFI, and LLIN…SPFT.

Its subcellular location is the cell membrane. This is an uncharacterized protein from Aquifex aeolicus (strain VF5).